A 619-amino-acid chain; its full sequence is Phosphomethylpyrimidine synthase (619 aa).

Over residues 1–11 (MHEQRSLTMNA) the composition is skewed to polar residues. The segment at 1 to 25 (MHEQRSLTMNALTPAVSTGPLPASR) is disordered. Substrate is bound by residues asparagine 220, methionine 249, tyrosine 278, histidine 314, 334-336 (SRG), 375-378 (DGLR), and glutamate 414. A Zn(2+)-binding site is contributed by histidine 418. Tyrosine 441 is a binding site for substrate. Zn(2+) is bound at residue histidine 482. Residues cysteine 562, cysteine 565, and cysteine 570 each coordinate [4Fe-4S] cluster.

This sequence belongs to the ThiC family. In terms of assembly, homodimer. [4Fe-4S] cluster serves as cofactor.

The enzyme catalyses 5-amino-1-(5-phospho-beta-D-ribosyl)imidazole + S-adenosyl-L-methionine = 4-amino-2-methyl-5-(phosphooxymethyl)pyrimidine + CO + 5'-deoxyadenosine + formate + L-methionine + 3 H(+). It functions in the pathway cofactor biosynthesis; thiamine diphosphate biosynthesis. Its function is as follows. Catalyzes the synthesis of the hydroxymethylpyrimidine phosphate (HMP-P) moiety of thiamine from aminoimidazole ribotide (AIR) in a radical S-adenosyl-L-methionine (SAM)-dependent reaction. This Mesorhizobium japonicum (strain LMG 29417 / CECT 9101 / MAFF 303099) (Mesorhizobium loti (strain MAFF 303099)) protein is Phosphomethylpyrimidine synthase.